We begin with the raw amino-acid sequence, 814 residues long: Acyl-coenzyme A dehydrogenase (814 aa).

The Proton acceptor role is filled by Glu-497.

Belongs to the acyl-CoA dehydrogenase family. FAD is required as a cofactor.

The catalysed reaction is a medium-chain 2,3-saturated fatty acyl-CoA + oxidized [electron-transfer flavoprotein] + H(+) = a medium-chain (2E)-enoyl-CoA + reduced [electron-transfer flavoprotein]. It carries out the reaction a long-chain 2,3-saturated fatty acyl-CoA + oxidized [electron-transfer flavoprotein] + H(+) = a long-chain (2E)-enoyl-CoA + reduced [electron-transfer flavoprotein]. It participates in lipid metabolism; fatty acid beta-oxidation. Catalyzes the dehydrogenation of acyl-coenzymes A (acyl-CoAs) to 2-enoyl-CoAs, the first step of the beta-oxidation cycle of fatty acid degradation. Is required for S.typhimurium to utilize medium- and long-chain fatty acids as sole carbon sources for growth. Is needed for bacterial survival during carbone-source starvation. In Salmonella typhimurium (strain LT2 / SGSC1412 / ATCC 700720), this protein is Acyl-coenzyme A dehydrogenase (fadE).